The chain runs to 316 residues: Ribosomal RNA small subunit methyltransferase H (316 aa).

S-adenosyl-L-methionine is bound by residues 35–37 (AGH), Asp55, Phe84, Asp105, and Gln112.

The protein belongs to the methyltransferase superfamily. RsmH family.

It is found in the cytoplasm. The enzyme catalyses cytidine(1402) in 16S rRNA + S-adenosyl-L-methionine = N(4)-methylcytidine(1402) in 16S rRNA + S-adenosyl-L-homocysteine + H(+). Functionally, specifically methylates the N4 position of cytidine in position 1402 (C1402) of 16S rRNA. The protein is Ribosomal RNA small subunit methyltransferase H of Streptococcus pneumoniae (strain P1031).